The following is an 87-amino-acid chain: Acylphosphatase (87 aa).

The Acylphosphatase-like domain occupies R2–Y87. Active-site residues include R17 and N35.

The protein belongs to the acylphosphatase family.

The catalysed reaction is an acyl phosphate + H2O = a carboxylate + phosphate + H(+). The chain is Acylphosphatase (acyP) from Deinococcus geothermalis (strain DSM 11300 / CIP 105573 / AG-3a).